The primary structure comprises 725 residues: Endoglucanase G (725 aa).

The first 35 residues, 1–35, serve as a signal peptide directing secretion; the sequence is MLKTKRKLTKAIGVALSISILSSLVSFIPQTNTYA. Catalysis depends on aspartate 93, which acts as the Nucleophile. Active-site residues include histidine 408, aspartate 446, and glutamate 455. The 162-residue stretch at 489–650 folds into the CBM3 domain; that stretch reads ITNDEVIIKA…GVKVFGNEPA (162 aa). One can recognise a Dockerin domain in the interval 658–724; that stretch reads PEILYGDVNS…LLGTITQLPQ (67 aa).

The protein belongs to the glycosyl hydrolase 9 (cellulase E) family.

It carries out the reaction Endohydrolysis of (1-&gt;4)-beta-D-glucosidic linkages in cellulose, lichenin and cereal beta-D-glucans.. It functions in the pathway glycan metabolism; cellulose degradation. Its function is as follows. The biological conversion of cellulose to glucose generally requires three types of hydrolytic enzymes: (1) Endoglucanases which cut internal beta-1,4-glucosidic bonds; (2) Exocellobiohydrolases that cut the disaccharide cellobiose from the non-reducing end of the cellulose polymer chain; (3) Beta-1,4-glucosidases which hydrolyze the cellobiose and other short cello-oligosaccharides to glucose. The protein is Endoglucanase G (celCCG) of Ruminiclostridium cellulolyticum (strain ATCC 35319 / DSM 5812 / JCM 6584 / H10) (Clostridium cellulolyticum).